The sequence spans 199 residues: IMP cyclohydrolase (199 aa).

This sequence belongs to the archaeal IMP cyclohydrolase family.

It catalyses the reaction IMP + H2O = 5-formamido-1-(5-phospho-D-ribosyl)imidazole-4-carboxamide. It functions in the pathway purine metabolism; IMP biosynthesis via de novo pathway; IMP from 5-formamido-1-(5-phospho-D-ribosyl)imidazole-4-carboxamide: step 1/1. Catalyzes the cyclization of 5-formylamidoimidazole-4-carboxamide ribonucleotide to IMP. The protein is IMP cyclohydrolase of Methanothrix thermoacetophila (strain DSM 6194 / JCM 14653 / NBRC 101360 / PT) (Methanosaeta thermophila).